The chain runs to 360 residues: sn-glycerol-3-phosphate import ATP-binding protein UgpC (360 aa).

The 232-residue stretch at 4-235 folds into the ABC transporter domain; that stretch reads LSLKGVRKSY…PATTFVASFI (232 aa). ATP is bound at residue 37–44; it reads GPSGCGKS.

The protein belongs to the ABC transporter superfamily. sn-glycerol-3-phosphate importer (TC 3.A.1.1.3) family. In terms of assembly, the complex is composed of two ATP-binding proteins (UgpC), two transmembrane proteins (UgpA and UgpE) and a solute-binding protein (UgpB).

It localises to the cell inner membrane. It carries out the reaction sn-glycerol 3-phosphate(out) + ATP + H2O = sn-glycerol 3-phosphate(in) + ADP + phosphate + H(+). Functionally, part of the ABC transporter complex UgpBAEC involved in sn-glycerol-3-phosphate (G3P) import. Responsible for energy coupling to the transport system. This is sn-glycerol-3-phosphate import ATP-binding protein UgpC from Burkholderia pseudomallei (strain 1710b).